Here is a 243-residue protein sequence, read N- to C-terminus: Ribonuclease PH (243 aa).

Phosphate contacts are provided by residues Arg91 and 129–131 (GTR).

Belongs to the RNase PH family. As to quaternary structure, homohexameric ring arranged as a trimer of dimers.

It carries out the reaction tRNA(n+1) + phosphate = tRNA(n) + a ribonucleoside 5'-diphosphate. Phosphorolytic 3'-5' exoribonuclease that plays an important role in tRNA 3'-end maturation. Removes nucleotide residues following the 3'-CCA terminus of tRNAs; can also add nucleotides to the ends of RNA molecules by using nucleoside diphosphates as substrates, but this may not be physiologically important. Probably plays a role in initiation of 16S rRNA degradation (leading to ribosome degradation) during starvation. The polypeptide is Ribonuclease PH (Burkholderia mallei (strain NCTC 10247)).